We begin with the raw amino-acid sequence, 224 residues long: 7-cyano-7-deazaguanine synthase (224 aa).

Residue Leu-12–Thr-22 participates in ATP binding. The Zn(2+) site is built by Cys-193, Cys-201, Cys-204, and Cys-207.

This sequence belongs to the QueC family. It depends on Zn(2+) as a cofactor.

It catalyses the reaction 7-carboxy-7-deazaguanine + NH4(+) + ATP = 7-cyano-7-deazaguanine + ADP + phosphate + H2O + H(+). The protein operates within purine metabolism; 7-cyano-7-deazaguanine biosynthesis. In terms of biological role, catalyzes the ATP-dependent conversion of 7-carboxy-7-deazaguanine (CDG) to 7-cyano-7-deazaguanine (preQ(0)). The protein is 7-cyano-7-deazaguanine synthase of Prochlorococcus marinus (strain AS9601).